Consider the following 215-residue polypeptide: Probable phosphoglycerate mutase GpmB (215 aa).

Substrate contacts are provided by residues arginine 8–asparagine 15, glutamine 21–glycine 22, arginine 58, arginine 60, glutamate 82–methionine 85, arginine 104–arginine 105, and glycine 151–isoleucine 152. Residue histidine 9 is the Tele-phosphohistidine intermediate of the active site. Glutamate 82 serves as the catalytic Proton donor/acceptor.

This sequence belongs to the phosphoglycerate mutase family. GpmB subfamily.

The catalysed reaction is (2R)-2-phosphoglycerate = (2R)-3-phosphoglycerate. Its pathway is carbohydrate degradation; glycolysis; pyruvate from D-glyceraldehyde 3-phosphate: step 3/5. This chain is Probable phosphoglycerate mutase GpmB, found in Klebsiella pneumoniae (strain 342).